The primary structure comprises 467 residues: Asparagine--tRNA ligase (467 aa).

It belongs to the class-II aminoacyl-tRNA synthetase family. As to quaternary structure, homodimer.

The protein localises to the cytoplasm. It catalyses the reaction tRNA(Asn) + L-asparagine + ATP = L-asparaginyl-tRNA(Asn) + AMP + diphosphate + H(+). The polypeptide is Asparagine--tRNA ligase (Baumannia cicadellinicola subsp. Homalodisca coagulata).